The sequence spans 216 residues: Large ribosomal subunit protein uL3 (216 aa).

N5-methylglutamine is present on Gln153.

It belongs to the universal ribosomal protein uL3 family. Part of the 50S ribosomal subunit. Forms a cluster with proteins L14 and L19. Methylated by PrmB.

Its function is as follows. One of the primary rRNA binding proteins, it binds directly near the 3'-end of the 23S rRNA, where it nucleates assembly of the 50S subunit. The chain is Large ribosomal subunit protein uL3 from Burkholderia ambifaria (strain MC40-6).